The primary structure comprises 2021 residues: HEAT repeat-containing protein 5A (2021 aa).

HEAT repeat units lie at residues 795-836 (SQRP…HLAS) and 1059-1096 (VNLS…REAA). Disordered regions lie at residues 1503–1528 (EGNG…LPAD) and 1989–2012 (RGNQ…HGSP). Positions 1512–1522 (VTPTSMGQERG) are enriched in polar residues.

It belongs to the HEATR5 family.

In Xenopus tropicalis (Western clawed frog), this protein is HEAT repeat-containing protein 5A (heatr5a).